Reading from the N-terminus, the 663-residue chain is UvrABC system protein B (663 aa).

One can recognise a Helicase ATP-binding domain in the interval 31–271; that stretch reads DNIEGGEKAQ…EQSISKIQAE (241 aa). 44-51 is a binding site for ATP; the sequence is GATGTGKT. Positions 97–120 match the Beta-hairpin motif; that stretch reads YYDYYQPEAYVPSSDTYIEKDSSV. The Helicase C-terminal domain maps to 435 to 601; the sequence is QMDDLLGEIN…TIKKDIRDLI (167 aa). The UVR domain occupies 627–662; the sequence is QEAIKQLQKNMQEAAELLDFELAAQLRDLILELKAM.

It belongs to the UvrB family. Forms a heterotetramer with UvrA during the search for lesions. Interacts with UvrC in an incision complex.

The protein localises to the cytoplasm. Its function is as follows. The UvrABC repair system catalyzes the recognition and processing of DNA lesions. A damage recognition complex composed of 2 UvrA and 2 UvrB subunits scans DNA for abnormalities. Upon binding of the UvrA(2)B(2) complex to a putative damaged site, the DNA wraps around one UvrB monomer. DNA wrap is dependent on ATP binding by UvrB and probably causes local melting of the DNA helix, facilitating insertion of UvrB beta-hairpin between the DNA strands. Then UvrB probes one DNA strand for the presence of a lesion. If a lesion is found the UvrA subunits dissociate and the UvrB-DNA preincision complex is formed. This complex is subsequently bound by UvrC and the second UvrB is released. If no lesion is found, the DNA wraps around the other UvrB subunit that will check the other stand for damage. This chain is UvrABC system protein B, found in Streptococcus equi subsp. equi (strain 4047).